Here is a 331-residue protein sequence, read N- to C-terminus: MNWLVWALLLCSSAMAHVHRDPTLDHHWDLWKKTYGKQYKEKNEEVARRLIWEKNLKTVTLHNLEHSMGMHSYELGMNHLGDMTSEEVISLMSSLRVPSQWPRNVTYKSDPNQKLPDSMDWREKGCVTEVKYQGACGSCWAFSAVGALEAQVKLKTGKLVSLSAQNLVDCSTAKYGNKGCNGGFMTEAFQYIIDNNGIDSEASYPYKAMDGKCQYDVKNRAATCSRYIELPFGSEEALKEAVANKGPVSVGIDASHSSFFLYKTGVYYDPSCTQNVNHGVLVVGYGNLDGKDYWLVKNSWGLHFGDQGYIRMARNSGNHCGIANYPSYPEI.

An N-terminal signal peptide occupies residues 1–16 (MNWLVWALLLCSSAMA). Positions 17–114 (HVHRDPTLDH…VTYKSDPNQK (98 aa)) are cleaved as a propeptide — activation peptide. Asn104 carries an N-linked (GlcNAc...) asparagine glycan. 4 disulfides stabilise this stretch: Cys126-Cys224, Cys136-Cys180, Cys170-Cys213, and Cys272-Cys320. Cys139 is a catalytic residue. Catalysis depends on residues His278 and Asn298.

The protein belongs to the peptidase C1 family. Monomer.

It is found in the lysosome. The protein resides in the secreted. Its subcellular location is the cytoplasmic vesicle. The protein localises to the phagosome. It catalyses the reaction Similar to cathepsin L, but with much less activity on Z-Phe-Arg-|-NHMec, and more activity on the Z-Val-Val-Arg-|-Xaa compound.. Functionally, thiol protease. Key protease responsible for the removal of the invariant chain from MHC class II molecules and MHC class II antigen presentation. The bond-specificity of this proteinase is in part similar to the specificities of cathepsin L. The polypeptide is Cathepsin S (CTSS) (Bos taurus (Bovine)).